We begin with the raw amino-acid sequence, 369 residues long: Tetraacyldisaccharide 4'-kinase (369 aa).

Position 68–75 (Val68–Thr75) interacts with ATP.

This sequence belongs to the LpxK family.

The enzyme catalyses a lipid A disaccharide + ATP = a lipid IVA + ADP + H(+). It functions in the pathway glycolipid biosynthesis; lipid IV(A) biosynthesis; lipid IV(A) from (3R)-3-hydroxytetradecanoyl-[acyl-carrier-protein] and UDP-N-acetyl-alpha-D-glucosamine: step 6/6. Transfers the gamma-phosphate of ATP to the 4'-position of a tetraacyldisaccharide 1-phosphate intermediate (termed DS-1-P) to form tetraacyldisaccharide 1,4'-bis-phosphate (lipid IVA). This is Tetraacyldisaccharide 4'-kinase from Chlamydia trachomatis serovar D (strain ATCC VR-885 / DSM 19411 / UW-3/Cx).